A 115-amino-acid chain; its full sequence is Protamine-2 (115 aa).

Residues 1 to 115 (MVRCHVKSPT…RRRRRCGRQL (115 aa)) form a disordered region. S8 carries the phosphoserine modification. Residues 24-38 (ETEHPDQARELRPED) show a composition bias toward basic and acidic residues. Basic residues-rich tracts occupy residues 44-79 (RTHR…RRRG) and 102-115 (RRMR…GRQL).

This sequence belongs to the protamine P2 family. In terms of assembly, interacts with TDRP. Post-translationally, proteolytic processing into mature chains is required for histone eviction during spermatogenesis. Transition proteins (TNP1 and TNP2) are required for processing. As to expression, testis.

It is found in the nucleus. The protein localises to the chromosome. Its function is as follows. Protamines substitute for histones in the chromatin of sperm during the haploid phase of spermatogenesis. They compact sperm DNA into a highly condensed, stable and inactive complex. This chain is Protamine-2 (PRM2), found in Bos taurus (Bovine).